A 111-amino-acid polypeptide reads, in one-letter code: Cytochrome c 2.1 (111 aa).

Position 2 is an N-acetylserine (serine 2). The heme c site is built by cysteine 20, cysteine 23, histidine 24, and methionine 85.

This sequence belongs to the cytochrome c family. Binds 1 heme c group covalently per subunit.

It is found in the mitochondrion intermembrane space. Electron carrier protein. The oxidized form of the cytochrome c heme group can accept an electron from the heme group of the cytochrome c1 subunit of cytochrome reductase. Cytochrome c then transfers this electron to the cytochrome oxidase complex, the final protein carrier in the mitochondrial electron-transport chain. The polypeptide is Cytochrome c 2.1 (cyc-2.1) (Caenorhabditis elegans).